Consider the following 402-residue polypeptide: Tryptophan synthase beta chain (402 aa).

Lys91 bears the N6-(pyridoxal phosphate)lysine mark.

Belongs to the TrpB family. In terms of assembly, tetramer of two alpha and two beta chains. Pyridoxal 5'-phosphate serves as cofactor.

It catalyses the reaction (1S,2R)-1-C-(indol-3-yl)glycerol 3-phosphate + L-serine = D-glyceraldehyde 3-phosphate + L-tryptophan + H2O. Its pathway is amino-acid biosynthesis; L-tryptophan biosynthesis; L-tryptophan from chorismate: step 5/5. The beta subunit is responsible for the synthesis of L-tryptophan from indole and L-serine. The polypeptide is Tryptophan synthase beta chain (Streptococcus thermophilus (strain CNRZ 1066)).